The sequence spans 1019 residues: Enteropeptidase (1019 aa).

Gly-2 is lipidated: N-myristoyl glycine. At 2–18 (GSKRGISSRHHSLSSYE) the chain is on the cytoplasmic side. The helical; Signal-anchor for type II membrane protein transmembrane segment at 19–47 (IMFAALFAILVVLCAGLIAVSCLTIKESQ) threads the bilayer. At 48–1019 (RGAALGQSHE…FTEWIQSFLH (972 aa)) the chain is on the extracellular side. The region spanning 54 to 169 (QSHEARATFK…NSVDILDKLT (116 aa)) is the SEA domain. 3 N-linked (GlcNAc...) asparagine glycosylation sites follow: Asn-116, Asn-147, and Asn-179. An LDL-receptor class A 1 domain is found at 182–223 (IECLPGSSPCTDALTCIKADLFCDGEVNCPDGSDEDNKMCAT). 4 disulfide bridges follow: Cys-184–Cys-197, Cys-191–Cys-210, Cys-204–Cys-221, and Cys-225–Cys-253. Residues 225–334 (CDGRFLLTGS…VGFNATYTAF (110 aa)) form the CUB 1 domain. Asn-328, Asn-335, Asn-388, Asn-440, Asn-470, Asn-503, Asn-534, and Asn-630 each carry an N-linked (GlcNAc...) asparagine glycan. The 163-residue stretch at 342–504 (YEKINCNFED…ISLTYGICNG (163 aa)) folds into the MAM domain. A disulfide bridge links Cys-524 with Cys-552. The CUB 2 domain maps to 524–634 (CGGPFELWEP…GGFKANFTTG (111 aa)). The LDL-receptor class A 2 domain occupies 641-679 (EPCKADHFQCKNGECVPLVNLCDGHLHCEDGSDEADCVR). Intrachain disulfides connect Cys-643–Cys-655, Cys-650–Cys-668, and Cys-662–Cys-677. Positions 678–771 (VRFFNGTTNN…LIRLQCNHKS (94 aa)) constitute an SRCR domain. N-linked (GlcNAc...) asparagine glycans are attached at residues Asn-682, Asn-706, and Asn-725. 3 cysteine pairs are disulfide-bonded: Cys-757–Cys-767, Cys-772–Cys-896, and Cys-810–Cys-826. Residues 785-1019 (IVGGSNAKEG…FTEWIQSFLH (235 aa)) form the Peptidase S1 domain. The Charge relay system role is filled by His-825. Asn-848 carries N-linked (GlcNAc...) asparagine glycosylation. Asp-876 acts as the Charge relay system in catalysis. 3 N-linked (GlcNAc...) asparagine glycosylation sites follow: Asn-887, Asn-909, and Asn-949. Disulfide bonds link Cys-910/Cys-977, Cys-941/Cys-956, and Cys-967/Cys-995. Ser-971 acts as the Charge relay system in catalysis.

Belongs to the peptidase S1 family. Heterodimer of a catalytic (light) chain and a multidomain (heavy) chain linked by a disulfide bond. In terms of processing, the chains are derived from a single precursor that is cleaved by a trypsin-like protease. As to expression, intestinal brush border.

It localises to the membrane. It carries out the reaction Activation of trypsinogen by selective cleavage of 6-Lys-|-Ile-7 bond.. In terms of biological role, responsible for initiating activation of pancreatic proteolytic proenzymes (trypsin, chymotrypsin and carboxypeptidase A). It catalyzes the conversion of trypsinogen to trypsin which in turn activates other proenzymes including chymotrypsinogen, procarboxypeptidases, and proelastases. This Homo sapiens (Human) protein is Enteropeptidase (TMPRSS15).